Here is a 195-residue protein sequence, read N- to C-terminus: Small ribosomal subunit protein eS7 (195 aa).

Phosphothreonine occurs at positions 146 and 151. Residues S172 and S173 each carry the phosphoserine modification.

Belongs to the eukaryotic ribosomal protein eS7 family. In terms of assembly, component of the small ribosomal subunit (SSU). Mature yeast ribosomes consist of a small (40S) and a large (60S) subunit. The 40S small subunit contains 1 molecule of ribosomal RNA (18S rRNA) and at least 33 different proteins. The large 60S subunit contains 3 rRNA molecules (25S, 5.8S and 5S rRNA) and at least 46 different proteins. Interacts with snoRNA U3. uS11 interacts with MPP10. Component of the ribosomal small subunit (SSU) processome composed of at least 40 protein subunits and snoRNA U3.

The protein localises to the cytoplasm. Its subcellular location is the nucleus. The protein resides in the nucleolus. Component of the ribosome, a large ribonucleoprotein complex responsible for the synthesis of proteins in the cell. The small ribosomal subunit (SSU) binds messenger RNAs (mRNAs) and translates the encoded message by selecting cognate aminoacyl-transfer RNA (tRNA) molecules. The large subunit (LSU) contains the ribosomal catalytic site termed the peptidyl transferase center (PTC), which catalyzes the formation of peptide bonds, thereby polymerizing the amino acids delivered by tRNAs into a polypeptide chain. The nascent polypeptides leave the ribosome through a tunnel in the LSU and interact with protein factors that function in enzymatic processing, targeting, and the membrane insertion of nascent chains at the exit of the ribosomal tunnel. eS7 is involved in nucleolar processing of pre-18S ribosomal RNA and ribosome assembly. This is Small ribosomal subunit protein eS7 (rps7) from Schizosaccharomyces pombe (strain 972 / ATCC 24843) (Fission yeast).